Reading from the N-terminus, the 319-residue chain is MDLNCLDFEQPILKIESKIHSLMKLIHHDKKLAINIYEKINHLKQKSVELTQKIFSNLSAWQIAQLARHPYRPYTLDYIAYIFDDFDELSGDRVYGDDKAIVGGIGRLNSRPVMVIGHQKGRDIQEKIRRNFGMSAPEGYRKALRLMKLAERFNLPIFTFIDTPGAYPGIGAEKRGQSIAIAKNLRAMTTLNIPIICTVIGEGGSGGALAISVGDKINMLQYSIYSVISPEGCASILWKNVQKAPLAAEVMGITAHRLKQLKLIDTVIPEPLGGAHRDIVSTSISIKTQLLLDLVELDALQEEKLLTRRYQKFMNYGYC.

Positions 43–296 constitute a CoA carboxyltransferase C-terminal domain; it reads LKQKSVELTQ…KTQLLLDLVE (254 aa).

This sequence belongs to the AccA family. Acetyl-CoA carboxylase is a heterohexamer composed of biotin carboxyl carrier protein (AccB), biotin carboxylase (AccC) and two subunits each of ACCase subunit alpha (AccA) and ACCase subunit beta (AccD).

It is found in the cytoplasm. The catalysed reaction is N(6)-carboxybiotinyl-L-lysyl-[protein] + acetyl-CoA = N(6)-biotinyl-L-lysyl-[protein] + malonyl-CoA. The protein operates within lipid metabolism; malonyl-CoA biosynthesis; malonyl-CoA from acetyl-CoA: step 1/1. Functionally, component of the acetyl coenzyme A carboxylase (ACC) complex. First, biotin carboxylase catalyzes the carboxylation of biotin on its carrier protein (BCCP) and then the CO(2) group is transferred by the carboxyltransferase to acetyl-CoA to form malonyl-CoA. This chain is Acetyl-coenzyme A carboxylase carboxyl transferase subunit alpha, found in Blochmanniella floridana.